A 599-amino-acid chain; its full sequence is NADH-quinone oxidoreductase subunit C/D (599 aa).

The span at 1-15 (MTDLTAQELAQPSWQ) shows a compositional bias: polar residues. The tract at residues 1–21 (MTDLTAQELAQPSWQTRDHQD) is disordered. An NADH dehydrogenase I subunit C region spans residues 1-189 (MTDLTAQELA…DPFELTKQKE (189 aa)). The segment at 213-599 (DFMFLNLGPN…IDFVMSDVDR (387 aa)) is NADH dehydrogenase I subunit D.

The protein in the N-terminal section; belongs to the complex I 30 kDa subunit family. In the C-terminal section; belongs to the complex I 49 kDa subunit family. As to quaternary structure, NDH-1 is composed of 13 different subunits. Subunits NuoB, CD, E, F, and G constitute the peripheral sector of the complex.

It is found in the cell inner membrane. It carries out the reaction a quinone + NADH + 5 H(+)(in) = a quinol + NAD(+) + 4 H(+)(out). Its function is as follows. NDH-1 shuttles electrons from NADH, via FMN and iron-sulfur (Fe-S) centers, to quinones in the respiratory chain. The immediate electron acceptor for the enzyme in this species is believed to be ubiquinone. Couples the redox reaction to proton translocation (for every two electrons transferred, four hydrogen ions are translocated across the cytoplasmic membrane), and thus conserves the redox energy in a proton gradient. The chain is NADH-quinone oxidoreductase subunit C/D from Erwinia tasmaniensis (strain DSM 17950 / CFBP 7177 / CIP 109463 / NCPPB 4357 / Et1/99).